Here is a 179-residue protein sequence, read N- to C-terminus: MFPMVTGFMNYGQQTVRAARYIGQSFMITLSHANRLPVTIQYPYEKLITSERFRGRIHFEFDKCIACEVCVRVCPIDLPVVDWRLDTDVRKKQLLNYSIDFGVCIFCGNCVEYCPTNCLSMTEEYELSTYDRHELNYNQIALGRLPMSVIEDYTIRTTTNLTPIKIAKNKPLGSRTITN.

4Fe-4S ferredoxin-type domains are found at residues 55 to 84 (GRIH…VDWR) and 95 to 124 (LNYS…MTEE). The [4Fe-4S] cluster site is built by cysteine 64, cysteine 67, cysteine 70, cysteine 74, cysteine 104, cysteine 107, cysteine 110, and cysteine 114.

It belongs to the complex I 23 kDa subunit family. NDH is composed of at least 16 different subunits, 5 of which are encoded in the nucleus. [4Fe-4S] cluster serves as cofactor.

It is found in the plastid. The protein localises to the chloroplast thylakoid membrane. It carries out the reaction a plastoquinone + NADH + (n+1) H(+)(in) = a plastoquinol + NAD(+) + n H(+)(out). It catalyses the reaction a plastoquinone + NADPH + (n+1) H(+)(in) = a plastoquinol + NADP(+) + n H(+)(out). Functionally, NDH shuttles electrons from NAD(P)H:plastoquinone, via FMN and iron-sulfur (Fe-S) centers, to quinones in the photosynthetic chain and possibly in a chloroplast respiratory chain. The immediate electron acceptor for the enzyme in this species is believed to be plastoquinone. Couples the redox reaction to proton translocation, and thus conserves the redox energy in a proton gradient. The polypeptide is NAD(P)H-quinone oxidoreductase subunit I, chloroplastic (Acorus calamus (Sweet flag)).